Consider the following 324-residue polypeptide: Polyprenol dehydrogenase (324 aa).

Catalysis depends on tyrosine 206, which acts as the Proton acceptor. 3 residues coordinate NAD(+): tyrosine 206, lysine 210, and threonine 243.

It belongs to the short-chain dehydrogenases/reductases (SDR) family.

The protein localises to the lipid droplet. It catalyses the reaction a di-trans,poly-cis-polyprenol + NAD(+) = a di-trans,poly-cis-polyprenal + NADH + H(+). The enzyme catalyses a di-trans,poly-cis-polyprenol + NADP(+) = a di-trans,poly-cis-polyprenal + NADPH + H(+). The catalysed reaction is a di-trans,poly-cis-dolichol + NADP(+) = a di-trans,poly-cis-dolichal + NADPH + H(+). It carries out the reaction a di-trans,poly-cis-dolichol + NAD(+) = a di-trans,poly-cis-dolichal + NADH + H(+). It functions in the pathway protein modification; protein glycosylation. Oxidoreductase that plays a key role in early steps of protein N-linked glycosylation by mediating two non-consecutive steps in dolichol biosynthesis. Acts both as a NAD(+)-dependent dehydrogenase and as a NADPH-dependent reductase during the conversion of polyprenol into dolichol. First catalyzes the NAD(+)-dependent dehydrogenation of polyprenol into polyprenal; polyprenal is then reduced into dolichal by srd5a3. It then catalyzes the NADPH-dependent reduction of dolichal into dolichol. In Danio rerio (Zebrafish), this protein is Polyprenol dehydrogenase.